A 130-amino-acid chain; its full sequence is Small ribosomal subunit protein uS8 (130 aa).

Belongs to the universal ribosomal protein uS8 family. Part of the 30S ribosomal subunit. Contacts proteins S5 and S12.

One of the primary rRNA binding proteins, it binds directly to 16S rRNA central domain where it helps coordinate assembly of the platform of the 30S subunit. In Vibrio parahaemolyticus serotype O3:K6 (strain RIMD 2210633), this protein is Small ribosomal subunit protein uS8.